Here is a 475-residue protein sequence, read N- to C-terminus: Peroxisome proliferator-activated receptor gamma (475 aa).

An O-linked (GlcNAc) threonine glycan is attached at T54. Position 82 is a phosphoserine; by MAPK (S82). The segment at residues 106-180 is a DNA-binding region (nuclear receptor); sequence AIECRVCGDK…VGMSHNAIRF (75 aa). 2 consecutive NR C4-type zinc fingers follow at residues 109–129 and 146–168; these read CRVC…CEGC and CDLN…FQKC. Residues 175 to 250 form an interaction with FAM120B region; that stretch reads HNAIRFGRMP…DKSPFVIYDM (76 aa). The 266-residue stretch at 208–473 folds into the NR LBD domain; the sequence is DLRALAKHLY…HPLLQEIYKD (266 aa). A Glycyl lysine isopeptide (Lys-Gly) (interchain with G-Cter in ubiquitin) cross-link involves residue K222. Residues 465–473 carry the 9aaTAD motif; sequence PLLQEIYKD.

Belongs to the nuclear hormone receptor family. NR1 subfamily. As to quaternary structure, interacts with FOXO1 (acetylated form). Heterodimer with other nuclear receptors, such as RXRA. The heterodimer with the retinoic acid receptor RXRA is called adipocyte-specific transcription factor ARF6. Interacts with NCOA6 coactivator, leading to a strong increase in transcription of target genes. Interacts with coactivator PPARBP, leading to a mild increase in transcription of target genes. Interacts with NOCA7 in a ligand-inducible manner. Interacts with NCOA1 and NCOA2 LXXLL motifs. Interacts with ASXL1, ASXL2, DNTTIP2, FAM120B, MAP2K1/MEK1, NR0B2, PDPK1, PRDM16, PRMT2 and TGFB1I1. Interacts (when activated by agonist) with PPP5C. Interacts with HELZ2 and THRAP3; the interaction stimulates the transcriptional activity of PPARG. Interacts with PER2, the interaction is ligand dependent and blocks PPARG recruitment to target promoters. Interacts with NOCT. Interacts with ACTN4. Interacts (when in the liganded conformation) with GPS2. Interacts with CRY1 and CRY2 in a ligand-dependent manner. In the absence of hormonal ligand, interacts with TACC1. In macrophages, interacts with PAQR3 and STUB1; the interactions promote PPARG poylubiquitination and STUB1-mediated degradation. In terms of processing, O-GlcNAcylation at Thr-54 reduces transcriptional activity in adipocytes. Post-translationally, phosphorylated at basal conditions and dephosphorylated when treated with the ligand. May be dephosphorylated by PPP5C. The phosphorylated form may be inactive and dephosphorylation induces adipogenic activity. Ubiquitinated by E3 ubiquitin-protein ligase complex containing FBXO9; leading to proteasomal degradation. Ubiquitinated at Lys-222 by TRIM55 leading to proteasomal degradation. Ubiquitinated by E3 ubiquitin-protein ligase STUB1/CHIP; leading to proteasomal degradation.

The protein localises to the nucleus. The protein resides in the cytoplasm. PDPK1 activates its transcriptional activity independently of its kinase activity. Interacts with HELZ2 and THRAP3; the interaction enhances the transcriptional activity of PPARG. Its function is as follows. Nuclear receptor that binds peroxisome proliferators such as hypolipidemic drugs and fatty acids. Once activated by a ligand, the nuclear receptor binds to DNA specific PPAR response elements (PPRE) and modulates the transcription of its target genes, such as acyl-CoA oxidase. It therefore controls the peroxisomal beta-oxidation pathway of fatty acids. Key regulator of adipocyte differentiation and glucose homeostasis. ARF6 acts as a key regulator of the tissue-specific adipocyte P2 (aP2) enhancer. Acts as a critical regulator of gut homeostasis by suppressing NF-kappa-B-mediated pro-inflammatory responses. Plays a role in the regulation of cardiovascular circadian rhythms by regulating the transcription of BMAL1 in the blood vessels. The chain is Peroxisome proliferator-activated receptor gamma (PPARG) from Cricetulus griseus (Chinese hamster).